A 725-amino-acid polypeptide reads, in one-letter code: MESLPIVLLSLISKAVVLICSLLTLIIQNSTAVTWGLACVWLAYVSFRFLFQVKITVHPAARETFESMVRKFQAESMFSEEATPCIVSVGDKDADLTPDPQREDIKIVKSSRRVSYAVRVAHVAKAQVGLLANSRANELVYSRLCREEMVKHGVRPSHIAHMVPLAVAACFIPLDSDFLAASIRQGEGMRERRALLGPSWEKXGGLLVTSGFTTPTWRGDPRGMLVTKGPPLAKPRKLYRFTGMGTHIRYGVHDHSLGNVRRGLVERLYMVEVKGELQPTPKPTPGAFNQMSRFSDRLSIHLPKTTRLTPREFLGFYTGRKLERYQKAVESLEMHPVREKDAWLSTFVKAEKLNITAKPDPAPRVIQPRDPRYNVEVGRFLRHSEEMLFKAINKTFGGRTIFKGLSSDQAGEEFKTLWDSFKDPVGIGMDASRFDQHISKDALEFEHKMWLSMFPKSERAELARLLSWQINNRGLARCPDGEIRYRVEGCRMSGDMNTSSGNCYIMCATVHNWCDNIKHIKHFRLANNGDDCMLVVERSDEKKVRNGLIEYYATLGFTMKVEPTVDVLERLEFCQTRPVLVDGKYRMVRNLHQSMSKDLHSLHDLDSSAARNAWVTAVGTGGRCMNDGVPVLKEFFKQFPDYNLEVKKGSDMAQKLRDDWKYKFNRTAAFQDLIPTQESRYSFWLAFGLLPDEQIALENGFSPLKMEIVNEQIQEETSLLQFSGA.

The region spanning 424 to 544 (PVGIGMDASR…VVERSDEKKV (121 aa)) is the RdRp catalytic domain.

This sequence belongs to the tombusviridae RNA polymerase family.

It catalyses the reaction RNA(n) + a ribonucleoside 5'-triphosphate = RNA(n+1) + diphosphate. Functionally, RNA-dependent RNA polymerase that plays an essential role in the virus replication. The chain is RNA-directed RNA polymerase from Chenopodium amaranticolor (Quinoa).